A 747-amino-acid polypeptide reads, in one-letter code: Anoctamin-9 (747 aa).

Residues 1-193 (MQDDESSQIF…LYFTWLGWYT (193 aa)) are Cytoplasmic-facing. A helical membrane pass occupies residues 194-214 (YMLVPAAVVGLIVFLSGFALF). At 215-259 (DSSQISKEICSANDIFMCPLGDHSHRYLRLSEMCTFAKLTHLFDN) the chain is on the extracellular side. The residue at position 245 (serine 245) is a Phosphoserine; by PKA. Residues 260-280 (EGTVLFAIFMALWATVFLEIW) traverse the membrane as a helical segment. Residues 281–326 (KRKRAHEVQSWKLYEWDEEEEEMALELINSPHYKLKDHRHSYLSST) lie on the Cytoplasmic side of the membrane. Residues 327 to 347 (IILILSLFMICLMIGMAHVLV) form a helical membrane-spanning segment. At 348-364 (VYRVLAGALFSSLVKQQ) the chain is on the extracellular side. Residues 365–385 (VTTAVVVTGAVVHYIIIVIMT) traverse the membrane as a helical segment. Residues 386–414 (KVNKYVALKLCKFEESGTFSEQERKFTVK) are Cytoplasmic-facing. The helical transmembrane segment at 415 to 435 (FFILQFFAHFSSLIYIAFILG) threads the bilayer. Over 436-543 (RINGHPGKST…EMMIQYGFTT (108 aa)) the chain is Extracellular. A helical membrane pass occupies residues 544 to 564 (IFVAAFPLAPLLALFSNLVEI). Residues 565-595 (RLDAIKMVRLQRRLVPRKAKDIGTWLQVLET) lie on the Cytoplasmic side of the membrane. The chain crosses the membrane as a helical span at residues 596–616 (IGVLAVIANGMVIAFTSEFIP). Over 617-695 (RVVYKYHYGP…FWFILAIRLT (79 aa)) the chain is Extracellular. N-linked (GlcNAc...) asparagine glycans are attached at residues asparagine 630, asparagine 643, asparagine 665, and asparagine 681. The helical transmembrane segment at 696 to 716 (FVILFEHFALCIKLIAAWFVP) threads the bilayer. Residues 717-747 (DVPQKVKNEVLQEKYDRIRHRMRFSSRSTDV) are Cytoplasmic-facing.

It belongs to the anoctamin family. Post-translationally, phosphorylation on Ser-245 by cAMP-dependent protein kinase A (PKA)is essential for activation of its cation channel activity. As to expression, highly expressed in the olfactory epithelium, particularly in mature olfactory sensory neurons (at protein level). Expressed in the kidney (at protein level). Predominant expression seen in epithelial tissues. Highly expressed in the small intestine, colon and stomach.

The protein resides in the cell membrane. It localises to the endoplasmic reticulum. The catalysed reaction is a 1,2-diacyl-sn-glycero-3-phospho-L-serine(in) = a 1,2-diacyl-sn-glycero-3-phospho-L-serine(out). It catalyses the reaction a beta-D-galactosyl-(1&lt;-&gt;1')-N-acylsphing-4-enine(out) = a beta-D-galactosyl-(1&lt;-&gt;1')-N-acylsphing-4-enine(in). The enzyme catalyses a 1,2-diacyl-sn-glycero-3-phosphocholine(in) = a 1,2-diacyl-sn-glycero-3-phosphocholine(out). It carries out the reaction Ca(2+)(in) = Ca(2+)(out). The catalysed reaction is Na(+)(in) = Na(+)(out). It catalyses the reaction K(+)(in) = K(+)(out). Cation channel activity is activated via phosphorylation on Ser-245 by cAMP-dependent protein kinase A (PKA). Inhibited by NaCl. Its function is as follows. PKA-activated nonselective cation channel. Discriminates poorly among cations but is more permeable to Ca(2+) ions than to monovalent cations. Acts as a calcium-activated calcium permeable channel which may operate as a endoplasmic reticulum (ER) Ca(2+)-leak channel, reducing the loading of the ER Ca(2+) store. Regulates intracellular Ca2+ signals, ion channel activity, and cytokine release in the renal tissue. Plays an important role in olfaction, amplifying cAMP-evoked cyclic nucleotide-gated (CNG) channel currents in the olfactory sensory neurons. Has calcium-dependent phospholipid scramblase activity; scrambles phosphatidylserine, phosphatidylcholine and galactosylceramide. Does not exhibit calcium-activated chloride channel (CaCC) activity. Can inhibit the activity of ANO1. This chain is Anoctamin-9, found in Mus musculus (Mouse).